The sequence spans 455 residues: Probable xyloglucan galactosyltransferase GT17 (455 aa).

Over 1-34 the chain is Cytoplasmic; it reads MTFNKRQVKINHWPEKNDKEKQKYSKNRETVKLT. Residues 35–55 form a helical; Signal-anchor for type II membrane protein membrane-spanning segment; the sequence is LLTLLLLCSICFLFLTLNFPF. Residues 56 to 455 are Lumenal-facing; it reads TIEFTASIPR…QARDNVVVSL (400 aa). N-linked (GlcNAc...) asparagine glycosylation is found at asparagine 70, asparagine 169, asparagine 230, asparagine 390, and asparagine 426.

This sequence belongs to the glycosyltransferase 47 family. In terms of tissue distribution, expressed in roots and hypocotyls.

The protein localises to the golgi apparatus membrane. In terms of biological role, functions in xyloglucan synthesis by adding side chains to the xylosylated glucan backbone. Involved in the galactosylation of hemicellulose xyloglucan. The polypeptide is Probable xyloglucan galactosyltransferase GT17 (Arabidopsis thaliana (Mouse-ear cress)).